Consider the following 290-residue polypeptide: Lysine export transcriptional regulatory protein LysG (290 aa).

One can recognise an HTH lysR-type domain in the interval 1–57 (MNPIQLDTLLSIIDEGSFEGASLALSISPSAVSQRVKALEHHVGRVLVSRTQPAKAT). The H-T-H motif DNA-binding region spans 18–37 (FEGASLALSISPSAVSQRVK).

This sequence belongs to the LysR transcriptional regulatory family.

Its function is as follows. Positively regulates the expression of the exporter LysE. Induction requires the presence of a coinducer, which is either intracellular L-lysine, L-arginine or L-citrulline. L-histidine also acts as a coinducer of lysE expression, but this amino acid is not exported by LysE. The lysEG system prevents bacteriostasis due to elevated L-lysine or L-arginine concentrations that arise during growth in the presence of peptides or in mutants possessing a deregulated biosynthesis pathway. This is Lysine export transcriptional regulatory protein LysG from Corynebacterium glutamicum (strain ATCC 13032 / DSM 20300 / JCM 1318 / BCRC 11384 / CCUG 27702 / LMG 3730 / NBRC 12168 / NCIMB 10025 / NRRL B-2784 / 534).